Reading from the N-terminus, the 707-residue chain is Polyribonucleotide nucleotidyltransferase (707 aa).

Positions 487 and 493 each coordinate Mg(2+). The 60-residue stretch at 554–613 (PKILTMNINPDKIRDVIGPSGKQINKIIEDTGVKIDIEQDGTIFISSTDESSNQKAKKII) folds into the KH domain. The region spanning 623–691 (GQLYLGKVKR…KQGRVNLSRK (69 aa)) is the S1 motif domain.

It belongs to the polyribonucleotide nucleotidyltransferase family. Mg(2+) is required as a cofactor.

It localises to the cytoplasm. It carries out the reaction RNA(n+1) + phosphate = RNA(n) + a ribonucleoside 5'-diphosphate. In terms of biological role, involved in mRNA degradation. Catalyzes the phosphorolysis of single-stranded polyribonucleotides processively in the 3'- to 5'-direction. In Bacillus velezensis (strain DSM 23117 / BGSC 10A6 / LMG 26770 / FZB42) (Bacillus amyloliquefaciens subsp. plantarum), this protein is Polyribonucleotide nucleotidyltransferase.